Consider the following 172-residue polypeptide: Thioredoxin M-type, chloroplastic (172 aa).

A chloroplast-targeting transit peptide spans 1–60 (MALESLFKSIHTKTSLSSSIVFIFKGKACLLTSKSRIQESFAELNSFTSLVLLIENHVLL). The Thioredoxin domain maps to 61–172 (HAREAVNEVQ…TLSEKVEKYI (112 aa)). Active-site nucleophile residues include Cys-97 and Cys-100. Cys-97 and Cys-100 are oxidised to a cystine.

The protein belongs to the thioredoxin family. Plant M-type subfamily. As to quaternary structure, forms a complex with heterodimeric ferredoxin-thioredoxin reductase (FTR) and ferredoxin.

Its subcellular location is the plastid. The protein resides in the chloroplast. Its function is as follows. Participates in various redox reactions through the reversible oxidation of the active center dithiol to a disulfide. The M form is known to activate NADP-malate dehydrogenase. This is Thioredoxin M-type, chloroplastic from Pisum sativum (Garden pea).